The following is a 204-amino-acid chain: Large ribosomal subunit protein uL13 (204 aa).

The protein belongs to the universal ribosomal protein uL13 family.

This is Large ribosomal subunit protein uL13 (RpL13A) from Spodoptera frugiperda (Fall armyworm).